The chain runs to 1053 residues: Probable dihydropyrimidine dehydrogenase [NADP(+)] (1053 aa).

The 4Fe-4S ferredoxin-type 1 domain occupies 84–115; it reads ERGALKEAMRCLKCADAPCQKSCPTQLDIKSF. The [4Fe-4S] cluster site is built by cysteine 94, cysteine 97, cysteine 102, cysteine 106, cysteine 145, cysteine 151, cysteine 155, and glutamine 171. FAD contacts are provided by residues 207–211, 231–239, arginine 248, and leucine 274; these read GCGPA and EKRAYIGGL. NADP(+) is bound by residues 354-357, 378-379, arginine 385, 451-453, and 495-501; these read AGDT, RK, AFG, and DVAGVAE. 494–503 contacts FAD; the sequence is GDVAGVAETT. FMN contacts are provided by residues serine 574 and 598-599; that span reads KT. Residues asparagine 633 and 692–694 each bind substrate; that span reads NLS. The active-site Proton acceptor is cysteine 695. Lysine 733 lines the FMN pocket. Residue 760-761 participates in substrate binding; that stretch reads NT. Residues glycine 791, 817–819, and 840–841 contribute to the FMN site; these read TGG and CS. 2 4Fe-4S ferredoxin-type domains span residues 949–981 and 983–1013; these read EVAI…FDAV and HQPH…MVPR. Residues cysteine 958, cysteine 961, cysteine 964, cysteine 968, cysteine 992, cysteine 995, cysteine 998, and cysteine 1002 each contribute to the [4Fe-4S] cluster site.

It belongs to the dihydropyrimidine dehydrogenase family. It depends on [4Fe-4S] cluster as a cofactor. FAD is required as a cofactor. Requires FMN as cofactor.

It catalyses the reaction 5,6-dihydrouracil + NADP(+) = uracil + NADPH + H(+). It participates in amino-acid biosynthesis; beta-alanine biosynthesis. Involved in pyrimidine base degradation. Catalyzes the reduction of uracil and thymine. Also involved the degradation of the chemotherapeutic drug 5-fluorouracil. This is Probable dihydropyrimidine dehydrogenase [NADP(+)] from Caenorhabditis briggsae.